The sequence spans 266 residues: 2-hydroxyisocaproyl-CoA dehydratase activator (266 aa).

Residues 10-14 and 102-104 each bind ATP; these read STASK and GQD. A [4Fe-4S] cluster-binding site is contributed by Cys-125. Asp-134 contributes to the ATP binding site. A [4Fe-4S] cluster-binding site is contributed by Cys-164. Positions 215 and 241 each coordinate ATP.

Belongs to the HadI activator family. As to quaternary structure, homodimer. The cofactor is [4Fe-4S] cluster.

Functionally, involved in the reductive branch of L-leucine fermentation. Required for the activation of (R)-2-hydroxyisocaproyl-CoA dehydratase. The reduced activator transfers one electron to the dehydratase concomitant with hydrolysis of ATP. This protein is extremely sensitive towards oxygen. In Clostridioides difficile (Peptoclostridium difficile), this protein is 2-hydroxyisocaproyl-CoA dehydratase activator.